We begin with the raw amino-acid sequence, 359 residues long: Pyruvate dehydrogenase E1 component subunit beta, mitochondrial (359 aa).

Residues M1–F19 constitute a mitochondrion transit peptide. Thiamine diphosphate is bound at residue E82. Residues I135, A183, I184, and D186 each contribute to the K(+) site.

As to quaternary structure, tetramer of 2 alpha and 2 beta subunits. It depends on thiamine diphosphate as a cofactor.

It localises to the mitochondrion matrix. The catalysed reaction is N(6)-[(R)-lipoyl]-L-lysyl-[protein] + pyruvate + H(+) = N(6)-[(R)-S(8)-acetyldihydrolipoyl]-L-lysyl-[protein] + CO2. In terms of biological role, the pyruvate dehydrogenase complex catalyzes the overall conversion of pyruvate to acetyl-CoA and CO(2). It contains multiple copies of three enzymatic components: pyruvate dehydrogenase (E1), dihydrolipoamide acetyltransferase (E2) and lipoamide dehydrogenase (E3). The polypeptide is Pyruvate dehydrogenase E1 component subunit beta, mitochondrial (Pisum sativum (Garden pea)).